Consider the following 193-residue polypeptide: Holliday junction branch migration complex subunit RuvA (193 aa).

The segment at 1–64 is domain I; that stretch reads MIGRIAGTLI…EDAHLLYGFG (64 aa). Positions 65–143 are domain II; it reads SAAERNTFRE…AELGHAPGAA (79 aa). Residues 144–151 are flexible linker; it reads PVHDSAVD. Residues 151–193 are domain III; sequence DILNALLALGYSEKEAATAIKQVPAGTGVSDGIKLALKALSKA.

It belongs to the RuvA family. In terms of assembly, homotetramer. Forms an RuvA(8)-RuvB(12)-Holliday junction (HJ) complex. HJ DNA is sandwiched between 2 RuvA tetramers; dsDNA enters through RuvA and exits via RuvB. An RuvB hexamer assembles on each DNA strand where it exits the tetramer. Each RuvB hexamer is contacted by two RuvA subunits (via domain III) on 2 adjacent RuvB subunits; this complex drives branch migration. In the full resolvosome a probable DNA-RuvA(4)-RuvB(12)-RuvC(2) complex forms which resolves the HJ.

Its subcellular location is the cytoplasm. The RuvA-RuvB-RuvC complex processes Holliday junction (HJ) DNA during genetic recombination and DNA repair, while the RuvA-RuvB complex plays an important role in the rescue of blocked DNA replication forks via replication fork reversal (RFR). RuvA specifically binds to HJ cruciform DNA, conferring on it an open structure. The RuvB hexamer acts as an ATP-dependent pump, pulling dsDNA into and through the RuvAB complex. HJ branch migration allows RuvC to scan DNA until it finds its consensus sequence, where it cleaves and resolves the cruciform DNA. This chain is Holliday junction branch migration complex subunit RuvA, found in Cupriavidus pinatubonensis (strain JMP 134 / LMG 1197) (Cupriavidus necator (strain JMP 134)).